We begin with the raw amino-acid sequence, 86 residues long: Small ribosomal subunit protein bS16 (86 aa).

The protein belongs to the bacterial ribosomal protein bS16 family.

The sequence is that of Small ribosomal subunit protein bS16 from Nostoc punctiforme (strain ATCC 29133 / PCC 73102).